The sequence spans 822 residues: Molybdenum cofactor sulfurase (822 aa).

Lys-239 is subject to N6-(pyridoxal phosphate)lysine. Residue Cys-401 is part of the active site. A disordered region spans residues 633–666 (TRISNPTRSSRRSQRALMPGSFPEDPSPTSEQPP). The MOSC domain occupies 643 to 820 (RRSQRALMPG…VMVGDVVTPQ (178 aa)).

It belongs to the class-V pyridoxal-phosphate-dependent aminotransferase family. MOCOS subfamily. Requires pyridoxal 5'-phosphate as cofactor.

The catalysed reaction is Mo-molybdopterin + L-cysteine + AH2 = thio-Mo-molybdopterin + L-alanine + A + H2O. The protein operates within cofactor biosynthesis; molybdopterin biosynthesis. Functionally, sulfurates the molybdenum cofactor. Sulfation of molybdenum is essential for xanthine dehydrogenase (XDH) and aldehyde oxidase (ADO) enzymes in which molybdenum cofactor is liganded by 1 oxygen and 1 sulfur atom in active form. This chain is Molybdenum cofactor sulfurase, found in Aspergillus oryzae (strain ATCC 42149 / RIB 40) (Yellow koji mold).